A 33-amino-acid chain; its full sequence is Glutaminase-asparaginase (33 aa).

Residues 1–33 (NVVVLATGGTIAGAGTNAFASQXGPLGMVVEGK) form the Asparaginase/glutaminase domain. The active-site Acyl-ester intermediate is T10.

Belongs to the asparaginase 1 family. As to quaternary structure, homotetramer.

The protein resides in the periplasm. The catalysed reaction is L-glutamine + H2O = L-glutamate + NH4(+). It catalyses the reaction L-asparagine + H2O = L-aspartate + NH4(+). The polypeptide is Glutaminase-asparaginase (ansB) (Delftia acidovorans (Pseudomonas acidovorans)).